The chain runs to 129 residues: Ribosome-binding factor A (129 aa).

This sequence belongs to the RbfA family. As to quaternary structure, monomer. Binds 30S ribosomal subunits, but not 50S ribosomal subunits or 70S ribosomes.

The protein localises to the cytoplasm. In terms of biological role, one of several proteins that assist in the late maturation steps of the functional core of the 30S ribosomal subunit. Associates with free 30S ribosomal subunits (but not with 30S subunits that are part of 70S ribosomes or polysomes). Required for efficient processing of 16S rRNA. May interact with the 5'-terminal helix region of 16S rRNA. The protein is Ribosome-binding factor A of Thermomicrobium roseum (strain ATCC 27502 / DSM 5159 / P-2).